A 365-amino-acid chain; its full sequence is MNENHYLLLTPGPLTTTKSVKEVMLYDWCTWDVEYNTMVQEVRAKLVSLATKEEEKYTTVLMQGSGTFSVEAVIGSVIPANGKLLVCTNGAYGKRIVQMAEMLQIDVVVSQTEEWEPTNIVEVEKLLQEDKEITHIAVVHCETTTGIINPIVDVCKLGKQYGKVTIVDAMSSFGGIEIDIADLQIDFLISSANKCIQGVPGFGFVIAKRDELLKCKGKGRSLSLDLYDQWETMEKQNGKWRFTSPTHVVHAFYQALLELEKEGGVRARYNRYYNNQKLLVNRMGEIGFKPLVDEKYQSPIITSFIYPKEGFEFQQLYNELKRYGFVIYPGKISKVDTFRIGNIGDVHEEDINRLVDSIAKGAVIG.

K194 is modified (N6-(pyridoxal phosphate)lysine).

Belongs to the class-V pyridoxal-phosphate-dependent aminotransferase family. PhnW subfamily. As to quaternary structure, homodimer. Requires pyridoxal 5'-phosphate as cofactor.

It catalyses the reaction (2-aminoethyl)phosphonate + pyruvate = phosphonoacetaldehyde + L-alanine. Involved in phosphonate degradation. This Bacillus cereus (strain G9842) protein is 2-aminoethylphosphonate--pyruvate transaminase.